The primary structure comprises 219 residues: Cytidylate kinase (219 aa).

21-29 (GPAASGKGT) is a binding site for ATP.

This sequence belongs to the cytidylate kinase family. Type 1 subfamily.

The protein localises to the cytoplasm. The enzyme catalyses CMP + ATP = CDP + ADP. The catalysed reaction is dCMP + ATP = dCDP + ADP. The polypeptide is Cytidylate kinase (Rickettsia akari (strain Hartford)).